The chain runs to 426 residues: Glutamyl-tRNA reductase (426 aa).

Substrate-binding positions include 49–52, serine 107, 112–114, and glutamine 118; these read TCNR and EPQ. The active-site Nucleophile is the cysteine 50. Position 187 to 192 (187 to 192) interacts with NADP(+); it reads GAGETI.

This sequence belongs to the glutamyl-tRNA reductase family. In terms of assembly, homodimer.

The enzyme catalyses (S)-4-amino-5-oxopentanoate + tRNA(Glu) + NADP(+) = L-glutamyl-tRNA(Glu) + NADPH + H(+). It functions in the pathway porphyrin-containing compound metabolism; protoporphyrin-IX biosynthesis; 5-aminolevulinate from L-glutamyl-tRNA(Glu): step 1/2. Its function is as follows. Catalyzes the NADPH-dependent reduction of glutamyl-tRNA(Glu) to glutamate 1-semialdehyde (GSA). The chain is Glutamyl-tRNA reductase from Ectopseudomonas mendocina (strain ymp) (Pseudomonas mendocina).